We begin with the raw amino-acid sequence, 118 residues long: Immunoglobulin heavy variable 4-30-2 (118 aa).

A signal peptide spans 1 to 19; sequence MKHLWFFLLLVAAPRWVLS. Residues 20 to 44 form a framework-1 region; the sequence is QLQLQESGSGLVKPSQTLSLTCAVS. The 99-residue stretch at 20 to 118 folds into the Ig-like domain; it reads QLQLQESGSG…ADTAVYYCAR (99 aa). Cys-41 and Cys-116 are disulfide-bonded. Residues 45 to 54 form a complementarity-determining-1 region; that stretch reads GGSISSGGYS. A framework-2 region spans residues 55–71; the sequence is WSWIRQPPGKGLEWIGY. The interval 72-78 is complementarity-determining-2; it reads IYHSGST. Residues 79-116 form a framework-3 region; it reads YYNPSLKSRVTISVDRSKNQFSLKLSSVTAADTAVYYC. Positions 117-118 are complementarity-determining-3; that stretch reads AR.

In terms of assembly, immunoglobulins are composed of two identical heavy chains and two identical light chains; disulfide-linked.

It is found in the secreted. The protein resides in the cell membrane. In terms of biological role, v region of the variable domain of immunoglobulin heavy chains that participates in the antigen recognition. Immunoglobulins, also known as antibodies, are membrane-bound or secreted glycoproteins produced by B lymphocytes. In the recognition phase of humoral immunity, the membrane-bound immunoglobulins serve as receptors which, upon binding of a specific antigen, trigger the clonal expansion and differentiation of B lymphocytes into immunoglobulins-secreting plasma cells. Secreted immunoglobulins mediate the effector phase of humoral immunity, which results in the elimination of bound antigens. The antigen binding site is formed by the variable domain of one heavy chain, together with that of its associated light chain. Thus, each immunoglobulin has two antigen binding sites with remarkable affinity for a particular antigen. The variable domains are assembled by a process called V-(D)-J rearrangement and can then be subjected to somatic hypermutations which, after exposure to antigen and selection, allow affinity maturation for a particular antigen. The polypeptide is Immunoglobulin heavy variable 4-30-2 (Homo sapiens (Human)).